Reading from the N-terminus, the 910-residue chain is Eukaryotic translation initiation factor 3 subunit C (910 aa).

The tract at residues 1–21 (MSRFFANGSESESESSEEEIQ) is disordered. Residues 11–20 (SESESSEEEI) are compositionally biased toward acidic residues. Ser-34, Ser-165, Ser-176, and Ser-185 each carry phosphoserine. The segment at 157 to 281 (FREAPDQESE…KRAEDDEDGE (125 aa)) is disordered. Acidic residues predominate over residues 162-186 (DQESEAEDEVVALESDGGDAGDDSD). Over residues 193 to 207 (EAAPKAVKSAPAKAA) the composition is skewed to low complexity. The segment covering 209–235 (ADDDDSDDSIDWDSDSESETESSDDEN) has biased composition (acidic residues). Positions 240–268 (MRERFLKRTTEKEEKDDDKRKDKRKEQKT) are enriched in basic and acidic residues. The 177-residue stretch at 639–815 (FHMHINLELL…ETVGMHRSEP (177 aa)) folds into the PCI domain. The disordered stretch occupies residues 847 to 910 (FFQRGNMGNR…QQQVQTIDEE (64 aa)). Over residues 862 to 874 (NRNQNNQGGNWLG) the composition is skewed to low complexity. Positions 882–891 (RNRNQRGHHK) are enriched in basic residues. The segment covering 895 to 910 (DRQQQQQQQVQTIDEE) has biased composition (low complexity).

It belongs to the eIF-3 subunit C family. In terms of assembly, component of the eukaryotic translation initiation factor 3 (eIF-3) complex. The eIF-3 complex interacts with pix.

The protein resides in the cytoplasm. In terms of biological role, component of the eukaryotic translation initiation factor 3 (eIF-3) complex, which is involved in protein synthesis of a specialized repertoire of mRNAs and, together with other initiation factors, stimulates binding of mRNA and methionyl-tRNAi to the 40S ribosome. The eIF-3 complex specifically targets and initiates translation of a subset of mRNAs involved in cell proliferation. In Drosophila sechellia (Fruit fly), this protein is Eukaryotic translation initiation factor 3 subunit C.